We begin with the raw amino-acid sequence, 261 residues long: uncharacterized protein (261 aa).

Helical transmembrane passes span 31-51 (TFLS…TGIV), 71-91 (TNVM…SWLL), 101-121 (LAYI…AGIA), 130-150 (LTSS…ASFI), 167-187 (LLLF…IPYV), and 213-233 (FAWL…YLAI).

It is found in the cell membrane. This is an uncharacterized protein from Mycoplasma genitalium (strain ATCC 33530 / DSM 19775 / NCTC 10195 / G37) (Mycoplasmoides genitalium).